Here is a 91-residue protein sequence, read N- to C-terminus: Small ribosomal subunit protein uS19 (91 aa).

It belongs to the universal ribosomal protein uS19 family.

In terms of biological role, protein S19 forms a complex with S13 that binds strongly to the 16S ribosomal RNA. This chain is Small ribosomal subunit protein uS19, found in Sphingopyxis alaskensis (strain DSM 13593 / LMG 18877 / RB2256) (Sphingomonas alaskensis).